A 158-amino-acid chain; its full sequence is 6,7-dimethyl-8-ribityllumazine synthase (158 aa).

Residues Phe-23, Ser-61–Glu-63, and Ala-85–Ile-87 contribute to the 5-amino-6-(D-ribitylamino)uracil site. Residue Glu-90–Thr-91 participates in (2S)-2-hydroxy-3-oxobutyl phosphate binding. His-93 (proton donor) is an active-site residue. Phe-118 contributes to the 5-amino-6-(D-ribitylamino)uracil binding site. Arg-132 is a binding site for (2S)-2-hydroxy-3-oxobutyl phosphate.

The protein belongs to the DMRL synthase family.

The catalysed reaction is (2S)-2-hydroxy-3-oxobutyl phosphate + 5-amino-6-(D-ribitylamino)uracil = 6,7-dimethyl-8-(1-D-ribityl)lumazine + phosphate + 2 H2O + H(+). It participates in cofactor biosynthesis; riboflavin biosynthesis; riboflavin from 2-hydroxy-3-oxobutyl phosphate and 5-amino-6-(D-ribitylamino)uracil: step 1/2. Catalyzes the formation of 6,7-dimethyl-8-ribityllumazine by condensation of 5-amino-6-(D-ribitylamino)uracil with 3,4-dihydroxy-2-butanone 4-phosphate. This is the penultimate step in the biosynthesis of riboflavin. This is 6,7-dimethyl-8-ribityllumazine synthase from Prochlorococcus marinus (strain MIT 9515).